The chain runs to 496 residues: Lysine--tRNA ligase (496 aa).

Mg(2+)-binding residues include Glu-409 and Glu-416.

The protein belongs to the class-II aminoacyl-tRNA synthetase family. Homodimer. It depends on Mg(2+) as a cofactor.

Its subcellular location is the cytoplasm. It catalyses the reaction tRNA(Lys) + L-lysine + ATP = L-lysyl-tRNA(Lys) + AMP + diphosphate. The protein is Lysine--tRNA ligase of Streptococcus pneumoniae serotype 19F (strain G54).